The chain runs to 229 residues: NAD(P)H-hydrate epimerase (229 aa).

In terms of domain architecture, YjeF N-terminal spans 9 to 216 (AISVDEELFN…KLEEKYAMNL (208 aa)). (6S)-NADPHX is bound at residue 59 to 63 (NNGGD). Residues Asn60 and Asp124 each contribute to the K(+) site. (6S)-NADPHX is bound by residues 128-134 (GFSFKPP) and Asp157. Ser160 serves as a coordination point for K(+).

It belongs to the NnrE/AIBP family. Requires K(+) as cofactor.

The enzyme catalyses (6R)-NADHX = (6S)-NADHX. It catalyses the reaction (6R)-NADPHX = (6S)-NADPHX. Catalyzes the epimerization of the S- and R-forms of NAD(P)HX, a damaged form of NAD(P)H that is a result of enzymatic or heat-dependent hydration. This is a prerequisite for the S-specific NAD(P)H-hydrate dehydratase to allow the repair of both epimers of NAD(P)HX. The chain is NAD(P)H-hydrate epimerase from Anopheles gambiae (African malaria mosquito).